We begin with the raw amino-acid sequence, 93 residues long: U12-lycotoxin-Ls1b (93 aa).

An N-terminal signal peptide occupies residues 1-18; the sequence is MKFAVILLFSLVVLAVAS. A propeptide spanning residues 19–38 is cleaved from the precursor; sequence ESVEEVRREIDIEDLPEQQR.

This sequence belongs to the neurotoxin 31 family. In terms of processing, contains 5 disulfide bonds. Expressed by the venom gland.

The protein localises to the secreted. The protein is U12-lycotoxin-Ls1b of Lycosa singoriensis (Wolf spider).